A 157-amino-acid polypeptide reads, in one-letter code: Large ribosomal subunit protein uL15 (157 aa).

The protein belongs to the universal ribosomal protein uL15 family. Part of the 50S ribosomal subunit.

Its function is as follows. Binds to the 23S rRNA. This chain is Large ribosomal subunit protein uL15, found in Ehrlichia ruminantium (strain Gardel).